The chain runs to 221 residues: N-(5'-phosphoribosyl)anthranilate isomerase (221 aa).

It belongs to the TrpF family.

The enzyme catalyses N-(5-phospho-beta-D-ribosyl)anthranilate = 1-(2-carboxyphenylamino)-1-deoxy-D-ribulose 5-phosphate. The protein operates within amino-acid biosynthesis; L-tryptophan biosynthesis; L-tryptophan from chorismate: step 3/5. In Parabacteroides distasonis (strain ATCC 8503 / DSM 20701 / CIP 104284 / JCM 5825 / NCTC 11152), this protein is N-(5'-phosphoribosyl)anthranilate isomerase.